A 180-amino-acid chain; its full sequence is Inner membrane-spanning protein YciB (180 aa).

The next 5 helical transmembrane spans lie at 25–45 (QNATLYMLITSVICITLCYII), 49–69 (VSKLSIISTTVLLVSGSITLI), 76–96 (IKIKPTILYVIFGIIFLMSGI), 118–138 (ITLSYRTAAFFFFMAVVNEIV), and 150–170 (FKVFGIIPITFIFIVLQLPLL).

It belongs to the YciB family.

It is found in the cell inner membrane. Its function is as follows. Plays a role in cell envelope biogenesis, maintenance of cell envelope integrity and membrane homeostasis. The sequence is that of Inner membrane-spanning protein YciB from Rickettsia akari (strain Hartford).